Here is a 564-residue protein sequence, read N- to C-terminus: Dihydroxy-acid dehydratase (564 aa).

Cys-53 contacts [2Fe-2S] cluster. Asp-85 contributes to the Mg(2+) binding site. Position 126 (Cys-126) interacts with [2Fe-2S] cluster. 2 residues coordinate Mg(2+): Asp-127 and Lys-128. Lys-128 carries the post-translational modification N6-carboxylysine. Position 203 (Cys-203) interacts with [2Fe-2S] cluster. A Mg(2+)-binding site is contributed by Glu-454. Catalysis depends on Ser-480, which acts as the Proton acceptor.

It belongs to the IlvD/Edd family. As to quaternary structure, homodimer. [2Fe-2S] cluster is required as a cofactor. It depends on Mg(2+) as a cofactor.

The enzyme catalyses (2R)-2,3-dihydroxy-3-methylbutanoate = 3-methyl-2-oxobutanoate + H2O. It carries out the reaction (2R,3R)-2,3-dihydroxy-3-methylpentanoate = (S)-3-methyl-2-oxopentanoate + H2O. The protein operates within amino-acid biosynthesis; L-isoleucine biosynthesis; L-isoleucine from 2-oxobutanoate: step 3/4. It functions in the pathway amino-acid biosynthesis; L-valine biosynthesis; L-valine from pyruvate: step 3/4. Its function is as follows. Functions in the biosynthesis of branched-chain amino acids. Catalyzes the dehydration of (2R,3R)-2,3-dihydroxy-3-methylpentanoate (2,3-dihydroxy-3-methylvalerate) into 2-oxo-3-methylpentanoate (2-oxo-3-methylvalerate) and of (2R)-2,3-dihydroxy-3-methylbutanoate (2,3-dihydroxyisovalerate) into 2-oxo-3-methylbutanoate (2-oxoisovalerate), the penultimate precursor to L-isoleucine and L-valine, respectively. The chain is Dihydroxy-acid dehydratase from Mycobacterium ulcerans (strain Agy99).